The following is a 350-amino-acid chain: Probable sugar phosphate/phosphate translocator At4g32390 (350 aa).

Transmembrane regions (helical) follow at residues 15–35 (ILLS…VIVY), 49–69 (FPIT…VILI), 89–109 (VVPI…AYIY), 112–132 (VSFI…IGVL), 146–166 (MLSI…FDTW), 168–188 (VMLQ…IQIL), 205–225 (VAPC…LPIL), 235–255 (FVIF…VFLL), 263–283 (TMNV…WSVI), and 286–306 (TVTP…AYYN). The EamA domain maps to 38–155 (YILDKKMYNW…MLSISFGVAI (118 aa)). The disordered stretch occupies residues 324 to 350 (QGDEEEAGKLLEERESEAAAKRNETED).

Belongs to the TPT transporter family. TPT (TC 2.A.7.9) subfamily.

Its subcellular location is the membrane. This Arabidopsis thaliana (Mouse-ear cress) protein is Probable sugar phosphate/phosphate translocator At4g32390.